Here is a 160-residue protein sequence, read N- to C-terminus: DNA topoisomerase small subunit (160 aa).

Part of the DNA topoisomerase complex made of gp39, gp52 and gp60. Mg(2+) serves as cofactor.

The catalysed reaction is ATP-dependent breakage, passage and rejoining of double-stranded DNA.. Its function is as follows. Small subunit of the DNA topoisomerase that untwists superhelical DNA. Controls topological states of double-stranded DNA by transient breakage and subsequent rejoining of DNA strands. The polypeptide is DNA topoisomerase small subunit (60) (Enterobacteria phage T4 (Bacteriophage T4)).